The chain runs to 729 residues: 1,4-alpha-glucan branching enzyme GlgB (729 aa).

The active-site Nucleophile is aspartate 409. Glutamate 462 (proton donor) is an active-site residue.

It belongs to the glycosyl hydrolase 13 family. GlgB subfamily. As to quaternary structure, monomer.

The enzyme catalyses Transfers a segment of a (1-&gt;4)-alpha-D-glucan chain to a primary hydroxy group in a similar glucan chain.. It participates in glycan biosynthesis; glycogen biosynthesis. Catalyzes the formation of the alpha-1,6-glucosidic linkages in glycogen by scission of a 1,4-alpha-linked oligosaccharide from growing alpha-1,4-glucan chains and the subsequent attachment of the oligosaccharide to the alpha-1,6 position. This is 1,4-alpha-glucan branching enzyme GlgB from Saccharophagus degradans (strain 2-40 / ATCC 43961 / DSM 17024).